Reading from the N-terminus, the 274-residue chain is Diaminopimelate epimerase (274 aa).

Residues asparagine 11, glutamine 44, and asparagine 64 each coordinate substrate. Cysteine 73 acts as the Proton donor in catalysis. Substrate-binding positions include 74–75 (GN), asparagine 157, asparagine 190, and 208–209 (ER). Catalysis depends on cysteine 217, which acts as the Proton acceptor. Residue 218–219 (GS) coordinates substrate.

It belongs to the diaminopimelate epimerase family. Homodimer.

The protein localises to the cytoplasm. It catalyses the reaction (2S,6S)-2,6-diaminopimelate = meso-2,6-diaminopimelate. It functions in the pathway amino-acid biosynthesis; L-lysine biosynthesis via DAP pathway; DL-2,6-diaminopimelate from LL-2,6-diaminopimelate: step 1/1. Catalyzes the stereoinversion of LL-2,6-diaminopimelate (L,L-DAP) to meso-diaminopimelate (meso-DAP), a precursor of L-lysine and an essential component of the bacterial peptidoglycan. The protein is Diaminopimelate epimerase of Histophilus somni (strain 129Pt) (Haemophilus somnus).